We begin with the raw amino-acid sequence, 542 residues long: 2,3-bisphosphoglycerate-independent phosphoglycerate mutase (542 aa).

Positions 13 and 63 each coordinate Mn(2+). Serine 63 functions as the Phosphoserine intermediate in the catalytic mechanism. Residues histidine 124, 154–155 (RD), arginine 186, arginine 192, 263–266 (RADR), and lysine 357 each bind substrate. Aspartate 424, histidine 428, aspartate 465, histidine 466, and histidine 484 together coordinate Mn(2+).

It belongs to the BPG-independent phosphoglycerate mutase family. Monomer. Mn(2+) is required as a cofactor.

It carries out the reaction (2R)-2-phosphoglycerate = (2R)-3-phosphoglycerate. The protein operates within carbohydrate degradation; glycolysis; pyruvate from D-glyceraldehyde 3-phosphate: step 3/5. Functionally, catalyzes the interconversion of 2-phosphoglycerate and 3-phosphoglycerate. The polypeptide is 2,3-bisphosphoglycerate-independent phosphoglycerate mutase (Herpetosiphon aurantiacus (strain ATCC 23779 / DSM 785 / 114-95)).